Reading from the N-terminus, the 345-residue chain is S-adenosylmethionine:tRNA ribosyltransferase-isomerase (345 aa).

Belongs to the QueA family. In terms of assembly, monomer.

Its subcellular location is the cytoplasm. It catalyses the reaction 7-aminomethyl-7-carbaguanosine(34) in tRNA + S-adenosyl-L-methionine = epoxyqueuosine(34) in tRNA + adenine + L-methionine + 2 H(+). It participates in tRNA modification; tRNA-queuosine biosynthesis. Functionally, transfers and isomerizes the ribose moiety from AdoMet to the 7-aminomethyl group of 7-deazaguanine (preQ1-tRNA) to give epoxyqueuosine (oQ-tRNA). The polypeptide is S-adenosylmethionine:tRNA ribosyltransferase-isomerase (Shewanella sp. (strain MR-4)).